A 402-amino-acid chain; its full sequence is Zinc finger protein 587B (402 aa).

Residues 15–91 form the KRAB domain; sequence VTFEDVAVKF…PVTGVSPKKA (77 aa). The C2H2-type 1 zinc finger occupies 92-114; sequence HPCEMCGPILGDILHVADHQGTH. The segment at 120 to 142 adopts a C2H2-type 2; degenerate zinc-finger fold; it reads HRCEAWGNKLYDSGNFHQHQNEH. Residues Lys177, Lys200, and Lys253 each participate in a glycyl lysine isopeptide (Lys-Gly) (interchain with G-Cter in SUMO2) cross-link. 5 consecutive C2H2-type zinc fingers follow at residues 242–264, 270–292, 298–320, 326–348, and 354–383; these read YVCC…QRVH, YECG…QQFH, YGCE…QKVH, YECG…QRIH, and YKCG…WVDH. Lys366 participates in a covalent cross-link: Glycyl lysine isopeptide (Lys-Gly) (interchain with G-Cter in SUMO2).

This sequence belongs to the krueppel C2H2-type zinc-finger protein family.

It is found in the nucleus. May be involved in transcriptional regulation. This is Zinc finger protein 587B (ZNF587B) from Homo sapiens (Human).